We begin with the raw amino-acid sequence, 328 residues long: Nickel import system permease protein NikB (328 aa).

The next 6 membrane-spanning stretches (helical) occupy residues 11–31 (LMQMIVVLFVISTLTFILMKL), 104–124 (LLISFSTLVVSLCISIPLGII), 139–159 (VISTLSISLPAFFIGIILLFI), 170–190 (ILSQFILPVITLSLGMCAYII), 229–249 (ILPIIPLLGISLGSLIGGTVV), and 279–299 (VLFIGFFVVIINTIADLLTLL). Residues 100 to 297 (APITLLISFS…IINTIADLLT (198 aa)) form the ABC transmembrane type-1 domain.

It belongs to the binding-protein-dependent transport system permease family. OppBC subfamily. In terms of assembly, the complex is composed of two ATP-binding proteins (NikD and NikE), two transmembrane proteins (NikB and NikC) and a solute-binding protein (NikA).

Its subcellular location is the cell membrane. Its function is as follows. Part of the ABC transporter complex NikABCDE (Opp2) involved in nickel import. Probably responsible for the translocation of the substrate across the membrane. In Staphylococcus aureus (strain Mu50 / ATCC 700699), this protein is Nickel import system permease protein NikB.